A 592-amino-acid polypeptide reads, in one-letter code: Glutamine-rich protein 2 (592 aa).

The segment at 488–592 (QLQQAQHARP…TRGPRSTAAH (105 aa)) is disordered. Over residues 544 to 567 (LQSNVSHSSIPTDIASLQGSQQGL) the composition is skewed to polar residues.

In terms of assembly, interacts with AKAP3, ODF2 and TSSK4. Interacts with AKAP4. In terms of tissue distribution, expressed in testis. Not detected in heart, brain, kidney, stomach, ovary, liver, lung and uterus.

Its subcellular location is the nucleus membrane. The protein resides in the nucleus. It is found in the cytoplasm. It localises to the cell projection. The protein localises to the cilium. Its subcellular location is the flagellum. In terms of biological role, has an essential role in the formation of sperm flagella and flagellar structure maintainance. It acts as a suppressor of ubiquitination and degradation of proteins involved in flagellar development and motility. The polypeptide is Glutamine-rich protein 2 (Mus musculus (Mouse)).